Reading from the N-terminus, the 220-residue chain is 14-3-3-like protein (220 aa).

It belongs to the 14-3-3 family.

In Spinacia oleracea (Spinach), this protein is 14-3-3-like protein.